The primary structure comprises 189 residues: Thymidine kinase (189 aa).

ATP contacts are provided by residues 9–16 (GTMNSGKT) and 85–88 (DECQ). Residue glutamate 86 is the Proton acceptor of the active site. The Zn(2+) site is built by cysteine 143, cysteine 146, cysteine 180, and histidine 183.

This sequence belongs to the thymidine kinase family. In terms of assembly, homotetramer.

The protein localises to the cytoplasm. It carries out the reaction thymidine + ATP = dTMP + ADP + H(+). This chain is Thymidine kinase, found in Streptococcus agalactiae serotype Ia (strain ATCC 27591 / A909 / CDC SS700).